The following is a 246-amino-acid chain: NAD(P)H-hydrate epimerase (246 aa).

The region spanning Ala-12–Pro-234 is the YjeF N-terminal domain. Residue Asn-69–Asp-73 participates in (6S)-NADPHX binding. Asn-70 and Asp-138 together coordinate K(+). (6S)-NADPHX is bound by residues Gly-142 to Pro-148 and Asp-173. Residue Thr-176 participates in K(+) binding.

Belongs to the NnrE/AIBP family. The cofactor is K(+).

The protein resides in the cytoplasm. The protein localises to the mitochondrion. The catalysed reaction is (6R)-NADHX = (6S)-NADHX. It carries out the reaction (6R)-NADPHX = (6S)-NADPHX. In terms of biological role, catalyzes the epimerization of the S- and R-forms of NAD(P)HX, a damaged form of NAD(P)H that is a result of enzymatic or heat-dependent hydration. This is a prerequisite for the S-specific NAD(P)H-hydrate dehydratase to allow the repair of both epimers of NAD(P)HX. This is NAD(P)H-hydrate epimerase from Saccharomyces cerevisiae (strain ATCC 204508 / S288c) (Baker's yeast).